We begin with the raw amino-acid sequence, 805 residues long: Mitochondrial inner membrane m-AAA protease component AFG3L2 (805 aa).

The N-terminal 39 residues, 1–39, are a transit peptide targeting the mitochondrion; it reads MAHRCLLLWGRGACRPRGMPPMLLPGGRTGSTERLYLRM. A propeptide spans 40 to 67 (removed in mature form); it reads LYRYATTQAKTSRNSLLTDVIAAYQRLC. The segment at 74–127 is disordered; sequence FEKYFPNGKNGKKTSEPKEVMGEKKEPKPAAAPRPSGGGVGGGGKRGGKKDDSH. Positions 86–101 are enriched in basic and acidic residues; the sequence is KTSEPKEVMGEKKEPK. A compositionally biased stretch (gly residues) spans 109–118; the sequence is SGGGVGGGGK. Lys118 carries the post-translational modification N6-succinyllysine. 2 consecutive transmembrane segments (helical) span residues 144–164 and 252–272; these read FKMY…YFLF and GSFL…LYTI. Val311, Ala312, Thr353, Gly354, Lys355, Thr356, Leu357, and His491 together coordinate ATP. His575 is a Zn(2+) binding site. Residue Glu576 is part of the active site. Residues His579 and Asp650 each coordinate Zn(2+). The segment at 760–805 is disordered; it reads FVEGTGSLDEDTSLPEGLKDWNREREGSEEPSGEKVTSPVQGAGPA. Residues 776–787 are compositionally biased toward basic and acidic residues; it reads GLKDWNREREGS.

It in the N-terminal section; belongs to the AAA ATPase family. The protein in the C-terminal section; belongs to the peptidase M41 family. Homohexamer. Forms heterohexamers with SPG7. The m-AAA protease is either composed of homohexamers of AFG3L2 or heterohexamers of AFG3L2 and SPG7. Interacts with MAIP1. Interacts with DNAJC19. Interacts with PHB2. The cofactor is Zn(2+). Post-translationally, upon import into the mitochondrion, the N-terminal transit peptide is cleaved to generate an intermediate form which undergoes autocatalytic proteolytic processing to generate the proteolytically active mature form.

The protein resides in the mitochondrion inner membrane. It catalyses the reaction ATP + H2O = ADP + phosphate + H(+). In terms of biological role, catalytic component of the m-AAA protease, a protease that plays a key role in proteostasis of inner mitochondrial membrane proteins, and which is essential for axonal and neuron development. AFG3L2 possesses both ATPase and protease activities: the ATPase activity is required to unfold substrates, threading them into the internal proteolytic cavity for hydrolysis into small peptide fragments. The m-AAA protease carries out protein quality control in the inner membrane of the mitochondria by mediating degradation of mistranslated or misfolded polypeptides. The m-AAA protease complex also promotes the processing and maturation of mitochondrial proteins, such as MRPL32/bL32m, PINK1 and SP7. Mediates protein maturation of the mitochondrial ribosomal subunit MRPL32/bL32m by catalyzing the cleavage of the presequence of MRPL32/bL32m prior to assembly into the mitochondrial ribosome. Required for SPG7 maturation into its active mature form after SPG7 cleavage by mitochondrial-processing peptidase (MPP). Required for the maturation of PINK1 into its 52kDa mature form after its cleavage by mitochondrial-processing peptidase (MPP). Acts as a regulator of calcium in neurons by mediating degradation of SMDT1/EMRE before its assembly with the uniporter complex, limiting the availability of SMDT1/EMRE for MCU assembly and promoting efficient assembly of gatekeeper subunits with MCU. Promotes the proteolytic degradation of GHITM upon hyperpolarization of mitochondria: progressive GHITM degradation leads to respiratory complex I degradation and broad reshaping of the mitochondrial proteome by AFG3L2. Also acts as a regulator of mitochondrial glutathione homeostasis by mediating cleavage and degradation of SLC25A39. SLC25A39 cleavage is prevented when SLC25A39 binds iron-sulfur. Involved in the regulation of OMA1-dependent processing of OPA1. May act by mediating processing of OMA1 precursor, participating in OMA1 maturation. This Bos taurus (Bovine) protein is Mitochondrial inner membrane m-AAA protease component AFG3L2 (AFG3L2).